Reading from the N-terminus, the 873-residue chain is Actin-related protein 8 (873 aa).

The segment at 108 to 129 is disordered; the sequence is DEQVKPTSSTSSTSTTEEVEIK. Low complexity predominate over residues 114-123; sequence TSSTSSTSTT. 368–371 contacts ATP; the sequence is DLGH. Over residues 596–650 the composition is skewed to low complexity; sequence NNNNNNNNSSSSSNNNNNNNNSGSNSNINSYNNNNNNNNNNNNNNNNNNNNSFNN. The segment at 596 to 701 is disordered; that stretch reads NNNNNNNNSS…TSSPTKKLKI (106 aa). Residues 651-668 are compositionally biased toward polar residues; that stretch reads VTIVTSTLNSNSTVPSTL. Over residues 669-696 the composition is skewed to low complexity; it reads NSNSTVPSISNSNSTVPSTSTSTTSSPT. Residues 762-804 are a coiled coil; it reads FKQLEQQYQAQQLQFQQQLQQQQQQQQQLQQQLQNSTNSATTT.

This sequence belongs to the actin family. ARP8 subfamily. As to quaternary structure, component of the chromatin remodeling INO80 complex. Exists as monomers and dimers, but the dimer is most probably the biologically relevant form required for stable interactions with histones that exploits the twofold symmetry of the nucleosome core.

It localises to the nucleus. The protein resides in the cytoplasm. Its subcellular location is the cytoskeleton. Plays an important role in the functional organization of mitotic chromosomes. Exhibits low basal ATPase activity, and unable to polymerize. In terms of biological role, proposed core component of the chromatin remodeling INO80 complex which is involved in transcriptional regulation, DNA replication and probably DNA repair. Strongly prefer nucleosomes and H3-H4 tetramers over H2A-H2B dimers, suggesting it may act as a nucleosome recognition module within the complex. This chain is Actin-related protein 8, found in Dictyostelium discoideum (Social amoeba).